The primary structure comprises 389 residues: Lipid-A-disaccharide synthase (389 aa).

Belongs to the LpxB family.

The enzyme catalyses a lipid X + a UDP-2-N,3-O-bis[(3R)-3-hydroxyacyl]-alpha-D-glucosamine = a lipid A disaccharide + UDP + H(+). It participates in bacterial outer membrane biogenesis; LPS lipid A biosynthesis. Functionally, condensation of UDP-2,3-diacylglucosamine and 2,3-diacylglucosamine-1-phosphate to form lipid A disaccharide, a precursor of lipid A, a phosphorylated glycolipid that anchors the lipopolysaccharide to the outer membrane of the cell. This chain is Lipid-A-disaccharide synthase, found in Paraburkholderia phytofirmans (strain DSM 17436 / LMG 22146 / PsJN) (Burkholderia phytofirmans).